The primary structure comprises 288 residues: Proteasome subunit beta (288 aa).

Positions 1-57 (MTVDGQVGRWPVSAIPAAYMRPGSGSFTEFLAGAEPHLLPGRAGAQPAGAAPAVPHG) are cleaved as a propeptide — removed in mature form; by autocatalysis. The active-site Nucleophile is threonine 58.

The protein belongs to the peptidase T1B family. The 20S proteasome core is composed of 14 alpha and 14 beta subunits that assemble into four stacked heptameric rings, resulting in a barrel-shaped structure. The two inner rings, each composed of seven catalytic beta subunits, are sandwiched by two outer rings, each composed of seven alpha subunits. The catalytic chamber with the active sites is on the inside of the barrel. Has a gated structure, the ends of the cylinder being occluded by the N-termini of the alpha-subunits. Is capped by the proteasome-associated ATPase, ARC.

It is found in the cytoplasm. The catalysed reaction is Cleavage of peptide bonds with very broad specificity.. Its pathway is protein degradation; proteasomal Pup-dependent pathway. The formation of the proteasomal ATPase ARC-20S proteasome complex, likely via the docking of the C-termini of ARC into the intersubunit pockets in the alpha-rings, may trigger opening of the gate for substrate entry. Interconversion between the open-gate and close-gate conformations leads to a dynamic regulation of the 20S proteasome proteolysis activity. Its function is as follows. Component of the proteasome core, a large protease complex with broad specificity involved in protein degradation. The chain is Proteasome subunit beta from Nakamurella multipartita (strain ATCC 700099 / DSM 44233 / CIP 104796 / JCM 9543 / NBRC 105858 / Y-104) (Microsphaera multipartita).